We begin with the raw amino-acid sequence, 535 residues long: Cytochrome P450 4c3 (535 aa).

Glu342 and Cys481 together coordinate heme.

Belongs to the cytochrome P450 family. The cofactor is heme.

Its subcellular location is the endoplasmic reticulum membrane. The protein localises to the microsome membrane. May be involved in the metabolism of insect hormones and in the breakdown of synthetic insecticides. The sequence is that of Cytochrome P450 4c3 (Cyp4c3) from Drosophila melanogaster (Fruit fly).